We begin with the raw amino-acid sequence, 355 residues long: Methyltransferase FUS9 (355 aa).

S-adenosyl-L-homocysteine is bound by residues Tyr-18, Asn-63, Asp-86, Ser-123, and Phe-124. Position 231 (Phe-231) interacts with Mg(2+).

Belongs to the methyltransferase superfamily. Type-7 methyltransferase family. Mg(2+) is required as a cofactor.

The protein operates within mycotoxin biosynthesis. Methyltransferase; part of the gene cluster that mediates the biosynthesis of the mycotoxin fusarin C. Within the cluster, FUS1, FUS2, FUS8 and FUS9 are sufficient for fusarin production. The roles of the other FUS members are yet undetermined. The fusarin C synthetase FUS1 is responsible for the condensation of one acetyl-coenzyme A (CoA) unit with six malonyl-CoA units and the amide linkage of the arising heptaketide and homoserine, subsequently releasing the first intermediate, prefusarin, as an alcohol with an open ring structure. The cytochrome P450 monooxygenase FUS8 participates in multiple oxidation processes at carbon C-20 and is able to use the FUS1 product as substrate, resulting in formation of 20-hydroxy-prefusarin. This reaction seems to be essential before the 2-pyrrolidone ring closure can be catalyzed by FUS2, generating 20-hydroxy-fusarin. FUS8 is able to further oxidizes carbon C-20 after ring closure, resulting in the formation of carboxy-fusarin C. As the last step, FUS9 methylates the hydroxyl group at C-21 to generate fusarin C. Fusarin C can then rearrange to epi-fusarin C, the (z)-isomers, and fusarin A and fusarin D. The chain is Methyltransferase FUS9 from Gibberella fujikuroi (strain CBS 195.34 / IMI 58289 / NRRL A-6831) (Bakanae and foot rot disease fungus).